A 160-amino-acid polypeptide reads, in one-letter code: NADH-quinone oxidoreductase subunit B (160 aa).

[4Fe-4S] cluster-binding residues include C37, C38, C102, and C132.

This sequence belongs to the complex I 20 kDa subunit family. As to quaternary structure, NDH-1 is composed of 14 different subunits. Subunits NuoB, C, D, E, F, and G constitute the peripheral sector of the complex. [4Fe-4S] cluster is required as a cofactor.

Its subcellular location is the cell inner membrane. The enzyme catalyses a quinone + NADH + 5 H(+)(in) = a quinol + NAD(+) + 4 H(+)(out). Functionally, NDH-1 shuttles electrons from NADH, via FMN and iron-sulfur (Fe-S) centers, to quinones in the respiratory chain. Couples the redox reaction to proton translocation (for every two electrons transferred, four hydrogen ions are translocated across the cytoplasmic membrane), and thus conserves the redox energy in a proton gradient. This is NADH-quinone oxidoreductase subunit B from Neisseria gonorrhoeae (strain ATCC 700825 / FA 1090).